We begin with the raw amino-acid sequence, 146 residues long: Outer envelope pore protein 16, chloroplastic (146 aa).

Residues 1 to 73 are contains 4 beta strands; the sequence is MPRSSFSGSL…EKSLKKMCKE (73 aa). Transmembrane regions (helical) follow at residues 75–91, 103–119, and 128–146; these read AYWG…EYGV, AMFG…AASN, and DAIT…NYLT.

It belongs to the Tim17/Tim22/Tim23 family. Plastid outer envelope porin OEP16 (TC 1.B.30) subfamily. In terms of assembly, homodimer and oligomers in membrane.

Its subcellular location is the plastid. It localises to the chloroplast outer membrane. The protein resides in the etioplast membrane. Functionally, voltage-dependent high-conductance channel with a slight cation-selectivity; selective for amino acids but excludes triosephosphates or uncharged sugars. Non-essential amino acid-selective channel protein and translocation pore for NADPH:protochlorophyllide oxidoreductase A (PORA) and possibly PORB. The polypeptide is Outer envelope pore protein 16, chloroplastic (OEP16) (Pisum sativum (Garden pea)).